We begin with the raw amino-acid sequence, 156 residues long: Small ribosomal subunit protein uS7 (156 aa).

This sequence belongs to the universal ribosomal protein uS7 family. As to quaternary structure, part of the 30S ribosomal subunit. Contacts proteins S9 and S11.

Functionally, one of the primary rRNA binding proteins, it binds directly to 16S rRNA where it nucleates assembly of the head domain of the 30S subunit. Is located at the subunit interface close to the decoding center, probably blocks exit of the E-site tRNA. In Thermomicrobium roseum (strain ATCC 27502 / DSM 5159 / P-2), this protein is Small ribosomal subunit protein uS7.